A 646-amino-acid polypeptide reads, in one-letter code: Beta-galactosidase-1-like protein (646 aa).

Residues 1-23 (MPPDLPSLLLRLVVLLLLSQAEA) form the signal peptide. Asparagine 93 carries N-linked (GlcNAc...) asparagine glycosylation. The active-site Proton donor is the glutamate 182. An N-linked (GlcNAc...) asparagine glycan is attached at asparagine 239. Glutamate 260 functions as the Nucleophile in the catalytic mechanism.

It belongs to the glycosyl hydrolase 35 family.

It localises to the secreted. Its function is as follows. Probable glycosyl hydrolase. The protein is Beta-galactosidase-1-like protein (Glb1l) of Mus musculus (Mouse).